We begin with the raw amino-acid sequence, 348 residues long: Phosphoribosylformylglycinamidine cyclo-ligase (348 aa).

It belongs to the AIR synthase family.

It is found in the cytoplasm. The enzyme catalyses 2-formamido-N(1)-(5-O-phospho-beta-D-ribosyl)acetamidine + ATP = 5-amino-1-(5-phospho-beta-D-ribosyl)imidazole + ADP + phosphate + H(+). The protein operates within purine metabolism; IMP biosynthesis via de novo pathway; 5-amino-1-(5-phospho-D-ribosyl)imidazole from N(2)-formyl-N(1)-(5-phospho-D-ribosyl)glycinamide: step 2/2. The chain is Phosphoribosylformylglycinamidine cyclo-ligase from Cereibacter sphaeroides (strain KD131 / KCTC 12085) (Rhodobacter sphaeroides).